Reading from the N-terminus, the 282-residue chain is Pantothenate synthetase (282 aa).

An ATP-binding site is contributed by 30–37; the sequence is MGNLHDGH. His-37 acts as the Proton donor in catalysis. Gln-61 contacts (R)-pantoate. Gln-61 serves as a coordination point for beta-alanine. 149–152 is an ATP binding site; it reads GEKD. (R)-pantoate is bound at residue Gln-155. Position 186–189 (186–189) interacts with ATP; sequence MSSR.

It belongs to the pantothenate synthetase family. As to quaternary structure, homodimer.

It localises to the cytoplasm. The enzyme catalyses (R)-pantoate + beta-alanine + ATP = (R)-pantothenate + AMP + diphosphate + H(+). It functions in the pathway cofactor biosynthesis; (R)-pantothenate biosynthesis; (R)-pantothenate from (R)-pantoate and beta-alanine: step 1/1. Catalyzes the condensation of pantoate with beta-alanine in an ATP-dependent reaction via a pantoyl-adenylate intermediate. This chain is Pantothenate synthetase, found in Alteromonas mediterranea (strain DSM 17117 / CIP 110805 / LMG 28347 / Deep ecotype).